We begin with the raw amino-acid sequence, 335 residues long: MKIYSALLLAGTALFFTHPALATVCRNSNGTATDIFYDLSDVFTSGNNQPGQVVTLPEKSGWVGVNATCPAGTTVNYTYRSYVSELPVQSTEGNFKYLKLNDYLLGAMSITDSVAGVFYPPRNYILMGVDYNVSQQKPFGVQDSKLVFKLKVIRPFINMVTIPRQTMFTVYVTTSTGDALSTPVYTISYSGKVEVPQNCEVNAGQVVEFDFGDIGASLFSQAGAGNRPQGVTPQTKTIAIKCTNVAAQAYLSMRLEAEKASGQAMVSDNPDLGFVVANSNGTPLTPNNLSSKIPFHLDDNAAARVGIRAWPISVTGIKPAEGPFTARGYLRVDYD.

The first 22 residues, 1 to 22 (MKIYSALLLAGTALFFTHPALA), serve as a signal peptide directing secretion.

It belongs to the fimbrial protein family.

The protein localises to the fimbrium. Functionally, involved in regulation of length and mediation of adhesion of type 1 fimbriae (but not necessary for the production of fimbriae). A mannose-binding adhesin. The polypeptide is Type 1 fimbrin D-mannose specific adhesin (fimH) (Salmonella typhimurium (strain LT2 / SGSC1412 / ATCC 700720)).